We begin with the raw amino-acid sequence, 116 residues long: Large ribosomal subunit protein bL17 (116 aa).

It belongs to the bacterial ribosomal protein bL17 family. Part of the 50S ribosomal subunit. Contacts protein L32.

The protein is Large ribosomal subunit protein bL17 of Nostoc punctiforme (strain ATCC 29133 / PCC 73102).